Consider the following 614-residue polypeptide: Leucine-rich repeat protein soc-2 homolog (614 aa).

Disordered regions lie at residues 1–29 (MNLCSSAGATASTSSLSSSGHVESNSSGP) and 44–79 (NSGGSGRADTALNQSNRSTVNGGGGNPTNSNGPNLT). LRR repeat units follow at residues 134–155 (GIKRLDLSKSSITVLPNTVREC), 157–178 (HLTELYLYSNKIGQLPTEIGCL), 180–201 (NLRNLALNENSLTSLPESLKHC), 203–224 (QLKVLDLRHNKLAEIPSVIYRL), 226–247 (SLTTLYLRFNRITAVADDLRQL), 249–270 (NLTMLSLRENKIKELGSAIGAL), 272–293 (NLTTLDVSHNHLEHLPDDIGNC), 295–316 (NLSALDLQHNELLDIPDSIGNL), 318–340 (SLVRLGLRYNRLNSVPISLKNCK), 341–362 (SMDEFNVEGNGITQLPDGMLAS), 365–386 (ALTTITLSRNQFTSYPTGGPAQ), 389–410 (NVYSINLEHNRIDKIPYGIFSR), 413–434 (GLTKLNMKENMLTALPLDVGTW), 436–457 (NMVELNLATNALQKLPDDIMNL), 459–480 (NLEILILSNNMLKKIPNTIGNL), 482–503 (KLRILDLEENRIEVLPHEIGLL), 505–526 (ELQRLILQTNQITMLPRSIGHL), 528–549 (NLTHLSVSENNLQFLPEEIGSL), 551–573 (SLENLYINQNPGLEKLPFELALC), and 575–596 (NLKYLNIDKCPLGTIPPEIQAG).

Belongs to the SHOC2 family.

Functionally, acts as a Ras effector and participates in MAPK pathway activation. Probably acts as a regulatory subunit of protein phosphatase that specifically dephosphorylates Raf kinase and stimulate Raf activity at specialized signaling complexes upon Ras activation. This chain is Leucine-rich repeat protein soc-2 homolog (Sur-8), found in Drosophila virilis (Fruit fly).